The chain runs to 194 residues: MSQIKLIVGLANSGTKYEDTRHNAGEWLINEIARQFNVSLKEEAKFFGKVAKINAAGGEVRLLVPTTFMNLSGKAVGALANFYRIKPEEILVAHDELDLPPGVAKIKQGGGHGGHNGLKDIIASLGNSNNFYRVRIGIGHPGSKELVAGYVLGKPSPQDQEKINAAVDEAGRCVDLLLKDGITKATNRLNAFKA.

Residue tyrosine 17 coordinates tRNA. Histidine 22 functions as the Proton acceptor in the catalytic mechanism. The tRNA site is built by phenylalanine 68, asparagine 70, and asparagine 116.

Belongs to the PTH family. As to quaternary structure, monomer.

The protein resides in the cytoplasm. It catalyses the reaction an N-acyl-L-alpha-aminoacyl-tRNA + H2O = an N-acyl-L-amino acid + a tRNA + H(+). Its function is as follows. Hydrolyzes ribosome-free peptidyl-tRNAs (with 1 or more amino acids incorporated), which drop off the ribosome during protein synthesis, or as a result of ribosome stalling. Functionally, catalyzes the release of premature peptidyl moieties from peptidyl-tRNA molecules trapped in stalled 50S ribosomal subunits, and thus maintains levels of free tRNAs and 50S ribosomes. This chain is Peptidyl-tRNA hydrolase, found in Actinobacillus pleuropneumoniae serotype 7 (strain AP76).